The following is a 186-amino-acid chain: UPF0149 protein Pfl01_5435 (186 aa).

Belongs to the UPF0149 family.

This chain is UPF0149 protein Pfl01_5435, found in Pseudomonas fluorescens (strain Pf0-1).